We begin with the raw amino-acid sequence, 364 residues long: Medium-wave-sensitive opsin 1 (364 aa).

Residues 1-24 (MAQRWDPQRLAGGQPQDSHEDSTQ) are disordered. Residues 1-52 (MAQRWDPQRLAGGQPQDSHEDSTQSSIFTYTNSNATRGPFEGPNYHIAPRWV) lie on the Extracellular side of the membrane. A required for 11-cis-retinal regeneration region spans residues 17 to 43 (DSHEDSTQSSIFTYTNSNATRGPFEGP). N-linked (GlcNAc...) asparagine glycosylation occurs at asparagine 34. A helical membrane pass occupies residues 53-77 (YHITSTWMIIVVIASVFTNGLVLVA). Topologically, residues 78 to 89 (TMKFKKLRHPLN) are cytoplasmic. Residues 90–115 (WILVNLAIADLAETVIASTISVVNQL) form a helical membrane-spanning segment. Topologically, residues 116-129 (YGYFVLGHPLCVVE) are extracellular. Cysteine 126 and cysteine 203 are disulfide-bonded. A helical transmembrane segment spans residues 130–149 (GYTVSVCGITGLWSLAIISW). Residues 150–168 (ERWLVVCKPFGNMRFDAKL) are Cytoplasmic-facing. The helical transmembrane segment at 169 to 192 (AIVGIAFSWIWSAVWTAPPIFGWS) threads the bilayer. Residues 193-218 (RYWPYGLKTSCGPDVFSGTSYPGVQS) lie on the Extracellular side of the membrane. The chain crosses the membrane as a helical span at residues 219 to 246 (YMMVLMVTCCIIPLSIIILCYLQVWLAI). Over 247 to 268 (RAVAKQQKESESTQKAEKEVTR) the chain is Cytoplasmic. A helical transmembrane segment spans residues 269–292 (MVVVMVFAYCLCWGPYTFFACFAT). Residues 293-300 (ANPGYAFH) lie on the Extracellular side of the membrane. A helical membrane pass occupies residues 301–320 (PLVAALPAYFAKSATIYNPI). At lysine 312 the chain carries N6-(retinylidene)lysine. Residues 321–364 (IYVFMNRQFRNCILQLFGKKVDDTSELSSASKTEASSVSSVSPA) lie on the Cytoplasmic side of the membrane.

The protein belongs to the G-protein coupled receptor 1 family. Opsin subfamily. As to quaternary structure, monomer. Homodimer. Homotetramer. Post-translationally, O-glycosylated. In terms of processing, phosphorylated on some or all of the serine and threonine residues present in the C-terminal region. As to expression, expressed in cone photoreceptor cells.

It is found in the membrane. In terms of biological role, visual pigments are the light-absorbing molecules that mediate vision. They consist of an apoprotein, opsin, covalently linked to cis-retinal. May increase spectral sensitivity in dim light. The polypeptide is Medium-wave-sensitive opsin 1 (OPN1MW) (Sciurus carolinensis (Eastern gray squirrel)).